A 157-amino-acid chain; its full sequence is MIEINVYYKKWYSTIKKPKIFVKNVIKSSLINLNIYEYKPIISIVLANNILLQKLNYEYRNKNKPTNVLSFPYDKLNKKCNLGEIFLSLDTLIQESIDLNIPIEHHTCHMLIHGLLHILDYNHEEPLMQYIMESIEIKLLDKLGIRNPYVSRETIYP.

3 residues coordinate Zn(2+): His-113, His-117, and His-123.

It belongs to the endoribonuclease YbeY family. Zn(2+) serves as cofactor.

It is found in the cytoplasm. In terms of biological role, single strand-specific metallo-endoribonuclease involved in late-stage 70S ribosome quality control and in maturation of the 3' terminus of the 16S rRNA. This Ehrlichia ruminantium (strain Welgevonden) protein is Endoribonuclease YbeY.